The chain runs to 616 residues: Probable beta-hexosaminidase ARB_01353 (616 aa).

The N-terminal stretch at 1–20 (MRFAKALAITAVLLSGVVEA) is a signal peptide. A disordered region spans residues 96–117 (KFDPFPDQSSKPKEKRQNAPPG). Asn-333 carries an N-linked (GlcNAc...) asparagine glycan. Glu-361 functions as the Proton donor in the catalytic mechanism.

This sequence belongs to the glycosyl hydrolase 20 family.

The protein resides in the secreted. It carries out the reaction Hydrolysis of terminal non-reducing N-acetyl-D-hexosamine residues in N-acetyl-beta-D-hexosaminides.. Beta-hexosaminidase that shows a broad substrate specificity. The sequence is that of Probable beta-hexosaminidase ARB_01353 from Arthroderma benhamiae (strain ATCC MYA-4681 / CBS 112371) (Trichophyton mentagrophytes).